The following is a 270-amino-acid chain: 5'-AMP-activated protein kinase subunit beta-1 (270 aa).

The segment at 1-43 (MGNTSSERAALERQAGHKTPRRDSSGGTKDGDRPKILMDSPED) is disordered. Glycine 2 is lipidated: N-myristoyl glycine. The residue at position 4 (threonine 4) is a Phosphothreonine. Phosphoserine is present on residues serine 5 and serine 6. Residues 9–36 (AALERQAGHKTPRRDSSGGTKDGDRPKI) show a composition bias toward basic and acidic residues. Threonine 19 carries the post-translational modification Phosphothreonine. Serine 24 and serine 25 each carry phosphoserine; by autocatalysis. Residues serine 40, serine 96, and serine 101 each carry the phosphoserine modification. Residues 68–163 (EVNEKAPAQA…QVKKTDFEVF (96 aa)) are glycogen-binding domain. Serine 108 carries the post-translational modification Phosphoserine; by autocatalysis. Threonine 148 carries the post-translational modification Phosphothreonine. Position 182 is a phosphoserine (serine 182). At lysine 201 the chain carries N6-succinyllysine.

It belongs to the 5'-AMP-activated protein kinase beta subunit family. In terms of assembly, AMPK is a heterotrimer of an alpha catalytic subunit (PRKAA1 or PRKAA2), a beta (PRKAB1 or PRKAB2) and a gamma non-catalytic subunits (PRKAG1, PRKAG2 or PRKAG3). Interacts with FNIP1 and FNIP2. In terms of processing, phosphorylated when associated with the catalytic subunit (PRKAA1 or PRKAA2). Phosphorylated by ULK1; leading to negatively regulate AMPK activity and suggesting the existence of a regulatory feedback loop between ULK1 and AMPK. As to expression, highly expressed in kidney, heart, white adipose tissue, lung and spleen.

In terms of biological role, non-catalytic subunit of AMP-activated protein kinase (AMPK), an energy sensor protein kinase that plays a key role in regulating cellular energy metabolism. In response to reduction of intracellular ATP levels, AMPK activates energy-producing pathways and inhibits energy-consuming processes: inhibits protein, carbohydrate and lipid biosynthesis, as well as cell growth and proliferation. AMPK acts via direct phosphorylation of metabolic enzymes, and by longer-term effects via phosphorylation of transcription regulators. Also acts as a regulator of cellular polarity by remodeling the actin cytoskeleton; probably by indirectly activating myosin. Beta non-catalytic subunit acts as a scaffold on which the AMPK complex assembles, via its C-terminus that bridges alpha (PRKAA1 or PRKAA2) and gamma subunits (PRKAG1, PRKAG2 or PRKAG3). The sequence is that of 5'-AMP-activated protein kinase subunit beta-1 (Prkab1) from Rattus norvegicus (Rat).